Reading from the N-terminus, the 200-residue chain is Glycerol-3-phosphate acyltransferase (200 aa).

5 helical membrane-spanning segments follow: residues 1 to 21 (MITV…FAVV), 51 to 71 (VAAA…VVVA), 84 to 104 (VIAS…FLAF), 116 to 136 (ILLG…IIVA), and 159 to 179 (FLLQ…LLIL).

It belongs to the PlsY family. In terms of assembly, probably interacts with PlsX.

It is found in the cell inner membrane. It catalyses the reaction an acyl phosphate + sn-glycerol 3-phosphate = a 1-acyl-sn-glycero-3-phosphate + phosphate. It participates in lipid metabolism; phospholipid metabolism. Catalyzes the transfer of an acyl group from acyl-phosphate (acyl-PO(4)) to glycerol-3-phosphate (G3P) to form lysophosphatidic acid (LPA). This enzyme utilizes acyl-phosphate as fatty acyl donor, but not acyl-CoA or acyl-ACP. The polypeptide is Glycerol-3-phosphate acyltransferase (Nitrosomonas eutropha (strain DSM 101675 / C91 / Nm57)).